The primary structure comprises 424 residues: Interleukin-13 receptor subunit alpha-1 (424 aa).

A signal peptide spans 1 to 25 (MARPALLGELLVLLLWTATVGQVAA). Residues 26–340 (ATEVQPPVTN…QSIGKEQNST (315 aa)) are Extracellular-facing. The Fibronectin type-III 1 domain occupies 32–121 (PVTNLSVSVE…VKKCISPPEG (90 aa)). N-linked (GlcNAc...) asparagine glycosylation is found at Asn35, Asn59, Asn103, and Asn136. A disulfide bridge links Cys44 with Cys93. 2 disulfide bridges follow: Cys132/Cys142 and Cys171/Cys183. Positions 224-336 (KPDPPHIKHL…WSEAQSIGKE (113 aa)) constitute a Fibronectin type-III 2 domain. The N-linked (GlcNAc...) asparagine glycan is linked to Asn262. Residues 324 to 328 (WSDWS) carry the WSXWS motif motif. The N-linked (GlcNAc...) asparagine glycan is linked to Asn338. A helical membrane pass occupies residues 341-364 (FYTTMLLTIPVFVAVAVIILLFYL). Topologically, residues 365–424 (KRLKIIIFPPIPDPGKIFKEMFGDQNDDTLHWKKYDIYEKQSKEETDSVVLIENLKKAAP) are cytoplasmic. Residues 371 to 379 (IFPPIPDPG) carry the Box 1 motif motif.

The protein belongs to the type I cytokine receptor family. Type 5 subfamily. In terms of assembly, interleukin-13 receptor is a complex of IL4R, IL13RA1, and possibly other components. Interacts with TRAF3IP1. Interacts with IL4. Spleen, liver, thymus, heart, lung, kidney, testis, stomach, brain, skin, and colon; but not skeletal muscle.

It is found in the membrane. Its function is as follows. Binds with low affinity to interleukin-13 (IL13). Together with IL4RA can form a functional receptor for IL13. Also serves as an alternate accessory protein to the common cytokine receptor gamma chain for interleukin-4 (IL4) signaling, but cannot replace the function of IL2RG in allowing enhanced interleukin-2 (IL2) binding activity. The protein is Interleukin-13 receptor subunit alpha-1 (Il13ra1) of Mus musculus (Mouse).